We begin with the raw amino-acid sequence, 440 residues long: MENLATLYPAHIIELNRRVAEITAREQLAGLVIHSGQPHRQFLDDLDYPFKVNPHFKAWLPVIDNPHCWLIVNGRDKPQLIFYRPVDFWHKVADLPEDFWTTEIEIKVLTKADKVADLLPGKLQEWAYIGEHLDVADVLGFGSRNPEAVMSYLHYHRASKTAYELACMRRASEIGVRGHVAAKSAFYAGASEFEIQQAYLAATDMGENDVPYGNIIALNQNAAILHYTALEHVSPKQRLSFLIDAGGSFHGYASDITRTYAFEKNLFGDLIAAMDKLQLAIIEMMRPGVKYVDLHLATHQKLAQLLLDFKLVQGDPQGLIEQGITSAFFPHGLGHMLGLQVHDMGGFLHDERGTHIAPPEAHPFLRCTRTLAANQVLTIEPGLYIIDSLLNELKQDGRADWINWQMVDQVRPFGGIRIEDNVIVHSDHNENMTRDLGLHG.

Asp-244, Asp-255, His-335, Glu-380, and Glu-419 together coordinate Mn(2+).

Belongs to the peptidase M24B family. Bacterial-type prolidase subfamily. Mn(2+) is required as a cofactor.

The catalysed reaction is Xaa-L-Pro dipeptide + H2O = an L-alpha-amino acid + L-proline. Its function is as follows. Splits dipeptides with a prolyl residue in the C-terminal position. The sequence is that of Xaa-Pro dipeptidase from Shewanella loihica (strain ATCC BAA-1088 / PV-4).